The sequence spans 126 residues: Histone H2B type 2-E (126 aa).

Residues 1-12 (MPEPAKSAPAPK) are compositionally biased toward low complexity. The interval 1–32 (MPEPAKSAPAPKKGSKKAVTKAQKKDGKKRKR) is disordered. Residue Pro-2 is modified to N-acetylproline. Glu-3 bears the ADP-ribosyl glutamic acid mark. Lys-6 is subject to N6-(2-hydroxyisobutyryl)lysine; alternate. The residue at position 6 (Lys-6) is an N6-(beta-hydroxybutyryl)lysine; alternate. Lys-6 is modified (N6-acetyllysine; alternate). Lys-6 carries the N6-butyryllysine; alternate modification. Lys-6 carries the post-translational modification N6-crotonyllysine; alternate. Lys-6 is subject to N6-lactoyllysine; alternate. A Glycyl lysine isopeptide (Lys-Gly) (interchain with G-Cter in SUMO2); alternate cross-link involves residue Lys-6. Ser-7 is subject to ADP-ribosylserine. An N6-(beta-hydroxybutyryl)lysine; alternate modification is found at Lys-12. Lys-12 and Lys-13 each carry N6-acetyllysine; alternate. N6-crotonyllysine; alternate is present on residues Lys-12 and Lys-13. Lys-12 carries the post-translational modification N6-lactoyllysine; alternate. Lys-13 carries the post-translational modification N6-(2-hydroxyisobutyryl)lysine; alternate. Ser-15 bears the Phosphoserine; by STK4/MST1 mark. N6-acetyllysine; alternate is present on residues Lys-16, Lys-17, Lys-21, and Lys-24. 4 positions are modified to N6-crotonyllysine; alternate: Lys-16, Lys-17, Lys-21, and Lys-24. An N6-lactoyllysine; alternate mark is found at Lys-16, Lys-17, Lys-21, and Lys-24. N6-glutaryllysine; alternate is present on Lys-17. 2 positions are modified to N6-(2-hydroxyisobutyryl)lysine; alternate: Lys-21 and Lys-24. Position 21 is an N6-(beta-hydroxybutyryl)lysine; alternate (Lys-21). Lys-21 bears the N6-butyryllysine; alternate mark. Lys-21 is covalently cross-linked (Glycyl lysine isopeptide (Lys-Gly) (interchain with G-Cter in SUMO2); alternate). Lys-25 is modified (N6-(2-hydroxyisobutyryl)lysine). The residue at position 35 (Lys-35) is an N6-(2-hydroxyisobutyryl)lysine; alternate. Lys-35 carries the post-translational modification N6-(beta-hydroxybutyryl)lysine; alternate. At Lys-35 the chain carries N6-crotonyllysine; alternate. The residue at position 35 (Lys-35) is an N6-glutaryllysine; alternate. Position 35 is an N6-succinyllysine; alternate (Lys-35). Lys-35 participates in a covalent cross-link: Glycyl lysine isopeptide (Lys-Gly) (interchain with G-Cter in ubiquitin); alternate. Glu-36 carries the polyADP-ribosyl glutamic acid modification. Ser-37 carries the phosphoserine; by AMPK modification. N6-(2-hydroxyisobutyryl)lysine; alternate is present on residues Lys-44, Lys-47, and Lys-58. Lys-44 carries the N6-lactoyllysine; alternate modification. N6-glutaryllysine; alternate occurs at positions 44 and 47. Lys-47 bears the N6-methyllysine; alternate mark. Lys-58 bears the N6,N6-dimethyllysine; alternate mark. Arg-80 carries the dimethylated arginine modification. At Lys-86 the chain carries N6-(2-hydroxyisobutyryl)lysine; alternate. Lys-86 is subject to N6-acetyllysine; alternate. Residue Lys-86 is modified to N6-lactoyllysine; alternate. Position 86 is an N6,N6,N6-trimethyllysine; alternate (Lys-86). Arg-87 and Arg-93 each carry omega-N-methylarginine. The residue at position 109 (Lys-109) is an N6-(2-hydroxyisobutyryl)lysine; alternate. Lys-109 carries the post-translational modification N6-lactoyllysine; alternate. Lys-109 carries the N6-glutaryllysine; alternate modification. Lys-109 is modified (N6-methyllysine; alternate). Residue Ser-113 is glycosylated (O-linked (GlcNAc) serine). Phosphothreonine is present on Thr-116. N6-(2-hydroxyisobutyryl)lysine; alternate occurs at positions 117 and 121. N6-(beta-hydroxybutyryl)lysine; alternate is present on Lys-117. N6-lactoyllysine; alternate is present on residues Lys-117 and Lys-121. Lys-117 and Lys-121 each carry N6-glutaryllysine; alternate. Residues Lys-117 and Lys-121 each carry the N6-succinyllysine; alternate modification. Lys-117 carries the post-translational modification N6-methylated lysine; alternate. A Glycyl lysine isopeptide (Lys-Gly) (interchain with G-Cter in ubiquitin); alternate cross-link involves residue Lys-121.

The protein belongs to the histone H2B family. In terms of assembly, the nucleosome is a histone octamer containing two molecules each of H2A, H2B, H3 and H4 assembled in one H3-H4 heterotetramer and two H2A-H2B heterodimers. The octamer wraps approximately 147 bp of DNA. Post-translationally, monoubiquitination at Lys-35 (H2BK34Ub) by the MSL1/MSL2 dimer is required for histone H3 'Lys-4' (H3K4me) and 'Lys-79' (H3K79me) methylation and transcription activation at specific gene loci, such as HOXA9 and MEIS1 loci. Similarly, monoubiquitination at Lys-121 (H2BK120Ub) by the RNF20/40 complex gives a specific tag for epigenetic transcriptional activation and is also prerequisite for histone H3 'Lys-4' and 'Lys-79' methylation. It also functions cooperatively with the FACT dimer to stimulate elongation by RNA polymerase II. H2BK120Ub also acts as a regulator of mRNA splicing: deubiquitination by USP49 is required for efficient cotranscriptional splicing of a large set of exons. In terms of processing, phosphorylated on Ser-15 (H2BS14ph) by STK4/MST1 during apoptosis; which facilitates apoptotic chromatin condensation. Also phosphorylated on Ser-15 in response to DNA double strand breaks (DSBs), and in correlation with somatic hypermutation and immunoglobulin class-switch recombination. Phosphorylation at Ser-37 (H2BS36ph) by AMPK in response to stress promotes transcription. ADP-ribosylated by PARP1 or PARP2 on Ser-7 (H2BS6ADPr) in response to DNA damage. H2BS6ADPr promotes recruitment of CHD1L. Mono-ADP-ribosylated on Glu-3 (H2BE2ADPr) by PARP3 in response to single-strand breaks. Poly ADP-ribosylation on Glu-36 (H2BE35ADPr) by PARP1 regulates adipogenesis: it inhibits phosphorylation at Ser-37 (H2BS36ph), thereby blocking expression of pro-adipogenetic genes. Post-translationally, crotonylation (Kcr) is specifically present in male germ cells and marks testis-specific genes in post-meiotic cells, including X-linked genes that escape sex chromosome inactivation in haploid cells. Crotonylation marks active promoters and enhancers and confers resistance to transcriptional repressors. It is also associated with post-meiotically activated genes on autosomes. In terms of processing, glcNAcylation at Ser-113 promotes monoubiquitination of Lys-121. It fluctuates in response to extracellular glucose, and associates with transcribed genes. Lactylated in macrophages by EP300/P300 by using lactoyl-CoA directly derived from endogenous or exogenous lactate, leading to stimulates gene transcription.

The protein resides in the nucleus. Its subcellular location is the chromosome. Functionally, core component of nucleosome. Nucleosomes wrap and compact DNA into chromatin, limiting DNA accessibility to the cellular machineries which require DNA as a template. Histones thereby play a central role in transcription regulation, DNA repair, DNA replication and chromosomal stability. DNA accessibility is regulated via a complex set of post-translational modifications of histones, also called histone code, and nucleosome remodeling. In terms of biological role, has broad antibacterial activity. May contribute to the formation of the functional antimicrobial barrier of the colonic epithelium, and to the bactericidal activity of amniotic fluid. The polypeptide is Histone H2B type 2-E (Pongo abelii (Sumatran orangutan)).